The primary structure comprises 225 residues: Phosphoserine phosphatase (225 aa).

Met-1 carries the post-translational modification N-acetylmethionine. The active-site Nucleophile is the Asp-20. The Mg(2+) site is built by Asp-20 and Asp-22. Residue Asp-20 to Asp-22 participates in L-serine binding. Catalysis depends on Asp-22, which acts as the Proton donor. An O-phospho-L-serine-binding site is contributed by Met-52. Gly-53 provides a ligand contact to phosphate. Residues Ser-109 to Gly-111 and Lys-158 each bind L-serine. Residues Ser-109–Gly-111 and Lys-158 contribute to the O-phospho-L-serine site. Mg(2+) is bound at residue Asp-179. An O-phospho-L-serine-binding site is contributed by Thr-182. Residue Thr-182 coordinates phosphate.

This sequence belongs to the HAD-like hydrolase superfamily. SerB family. As to quaternary structure, homodimer. Requires Mg(2+) as cofactor.

It localises to the cytoplasm. It is found in the cytosol. It catalyses the reaction O-phospho-L-serine + H2O = L-serine + phosphate. The enzyme catalyses O-phospho-D-serine + H2O = D-serine + phosphate. It participates in amino-acid biosynthesis; L-serine biosynthesis; L-serine from 3-phospho-D-glycerate: step 3/3. In terms of biological role, catalyzes the last irreversible step in the biosynthesis of L-serine from carbohydrates, the dephosphorylation of O-phospho-L-serine to L-serine. L-serine can then be used in protein synthesis, to produce other amino acids, in nucleotide metabolism or in glutathione synthesis, or can be racemized to D-serine, a neuromodulator. May also act on O-phospho-D-serine. This chain is Phosphoserine phosphatase, found in Rattus norvegicus (Rat).